Consider the following 272-residue polypeptide: TLC domain-containing protein 4 C (272 aa).

7 consecutive transmembrane segments (helical) span residues 16–36 (FSNS…FIIY), 71–91 (VSMI…VESF), 103–123 (SLLM…IICY), 128–148 (LVGT…IYVA), 155–175 (CFVP…PLNM), 196–216 (FVIT…IYLV), and 233–253 (VFIT…FLLI). The TLC domain occupies 61 to 261 (KKKLEWDQRV…LIKKLYQTYL (201 aa)).

The protein belongs to the TLCD4 family.

Its subcellular location is the membrane. This is TLC domain-containing protein 4 C (tlcd4c) from Dictyostelium discoideum (Social amoeba).